A 345-amino-acid polypeptide reads, in one-letter code: Fe(3+) ions import ATP-binding protein FbpC (345 aa).

The ABC transporter domain occupies 4–236 (LELHGIGKSY…PVDEPTASFL (233 aa)). 36-43 (GPSGSGKT) lines the ATP pocket.

The protein belongs to the ABC transporter superfamily. Fe(3+) ion importer (TC 3.A.1.10) family. As to quaternary structure, the complex is composed of two ATP-binding proteins (FbpC), two transmembrane proteins (FbpB) and a solute-binding protein (FbpA).

Its subcellular location is the cell inner membrane. The enzyme catalyses Fe(3+)(out) + ATP + H2O = Fe(3+)(in) + ADP + phosphate + H(+). Its function is as follows. Part of the ABC transporter complex FbpABC involved in Fe(3+) ions import. Responsible for energy coupling to the transport system. In Serratia marcescens, this protein is Fe(3+) ions import ATP-binding protein FbpC.